A 263-amino-acid polypeptide reads, in one-letter code: uncharacterized protein (263 aa).

The 88-residue stretch at 44–131 (QVYSLGTPNG…YLADKFNHLI (88 aa)) folds into the GST N-terminal domain. Residues 134–263 (DWAQRTEVLN…ALEVDYKAIK (130 aa)) enclose the GST C-terminal domain.

This sequence belongs to the GST superfamily. In terms of assembly, homodimer.

This is an uncharacterized protein from Streptococcus mutans serotype c (strain ATCC 700610 / UA159).